Reading from the N-terminus, the 274-residue chain is Malonyl-[acyl-carrier protein] O-methyltransferase (274 aa).

Belongs to the methyltransferase superfamily.

It carries out the reaction malonyl-[ACP] + S-adenosyl-L-methionine = malonyl-[ACP] methyl ester + S-adenosyl-L-homocysteine. It participates in cofactor biosynthesis; biotin biosynthesis. Converts the free carboxyl group of a malonyl-thioester to its methyl ester by transfer of a methyl group from S-adenosyl-L-methionine (SAM). It allows to synthesize pimeloyl-ACP via the fatty acid synthetic pathway. This Priestia megaterium (strain DSM 319 / IMG 1521) (Bacillus megaterium) protein is Malonyl-[acyl-carrier protein] O-methyltransferase.